The sequence spans 456 residues: MICGSKNKSYLKSQNLKIFGQGKLNGIVEISGAKNSALVLLAASLLTNERIVLQNVPRLTDIEKMANILRNLGVKIVEKNNRLELDSQNISIKELPYELVNGLRASFFCIGPLLSKFGEAKVPLPGGCNIGSRPIDEHINGLKALGAEILIEEEIVKANIKGDKSRLIGTHIKLKCPSVGATETLIMAASLAEGRTTIENAAREPEIQDLCQMLNKMGAKIYDSGKEKIIIDGVNELCGCSHKVIPDRIEAGTFLIAAAATSSSITISPVIPNHLEAVTNKLQESGSKITIKGNSITINCNKIKGVDIETAPFPGFPTDLQAPFTTLMAIANGESKITETIFENRMNHVHLLNKMGANIKLNKNIAHIKGVKKFKGMDLVGSDLRTSAALIIAGIIAEGTSTISGLEHLDRGYENFESKLKILGIKITREFNKKTLKNKEFKTSSDPADIPRYKAA.

34-35 (KN) is a binding site for phosphoenolpyruvate. Arg-104 is a binding site for UDP-N-acetyl-alpha-D-glucosamine. Cys-128 (proton donor) is an active-site residue. Cys-128 carries the 2-(S-cysteinyl)pyruvic acid O-phosphothioketal modification. Positions 319 and 341 each coordinate UDP-N-acetyl-alpha-D-glucosamine.

Belongs to the EPSP synthase family. MurA subfamily.

It localises to the cytoplasm. The enzyme catalyses phosphoenolpyruvate + UDP-N-acetyl-alpha-D-glucosamine = UDP-N-acetyl-3-O-(1-carboxyvinyl)-alpha-D-glucosamine + phosphate. The protein operates within cell wall biogenesis; peptidoglycan biosynthesis. Its function is as follows. Cell wall formation. Adds enolpyruvyl to UDP-N-acetylglucosamine. The chain is UDP-N-acetylglucosamine 1-carboxyvinyltransferase from Prochlorococcus marinus (strain MIT 9301).